A 247-amino-acid chain; its full sequence is UPF0309 protein Teth39_1980 (247 aa).

In terms of domain architecture, SIS spans 31–213 (IANSLLKEED…EAEIVFIMIK (183 aa)).

Belongs to the UPF0309 family.

In Thermoanaerobacter pseudethanolicus (strain ATCC 33223 / 39E) (Clostridium thermohydrosulfuricum), this protein is UPF0309 protein Teth39_1980.